Consider the following 950-residue polypeptide: ABC transporter A family member 9 (950 aa).

6 helical membrane-spanning segments follow: residues 31–51, 223–243, 276–296, 308–328, 342–362, and 426–446; these read ATCLHLFSSFFFILLIFSIEE, IISAFYLMGPVFFLAFSMFGF, WLIWEGILTFVSSLFLVLFGM, FVLVFLLFFLFQFNMIGLAFA, VGFLVFLVGFITQIVTTAGFP, and IWLVGTFFFWFVLALYFDNII. The ABC transporter domain maps to 520 to 765; the sequence is VQIHGLAKTY…FGTGFVATVS (246 aa). 566 to 573 lines the ATP pocket; that stretch reads GPNGAGKT.

This sequence belongs to the ABC transporter superfamily. ABCA family. CPR flippase (TC 3.A.1.211) subfamily. In terms of tissue distribution, highly expressed in siliques. Detected in seedlings, rosette leaves, stems and flowers.

It is found in the endoplasmic reticulum membrane. In terms of biological role, mediates the transport of acyl-CoAs and/or free fatty acids to the endoplasmic reticulum. Has no effect on the selectivity of fatty acid incorporation into triacylglycerol or further desaturation steps. The chain is ABC transporter A family member 9 (ABCA9) from Arabidopsis thaliana (Mouse-ear cress).